The primary structure comprises 95 residues: uncharacterized protein (95 aa).

The signal sequence occupies residues 1 to 21 (MKKITLFFTALLCLFSTSVLA).

This is an uncharacterized protein from Haemophilus influenzae (strain ATCC 51907 / DSM 11121 / KW20 / Rd).